A 327-amino-acid polypeptide reads, in one-letter code: Glycerol-3-phosphate dehydrogenase [NAD(P)+] (327 aa).

The NADPH site is built by F14, R35, and K108. Sn-glycerol 3-phosphate contacts are provided by K108 and G136. A140 is an NADPH binding site. Residues K191, D244, S254, R255, and N256 each contribute to the sn-glycerol 3-phosphate site. The active-site Proton acceptor is the K191. R255 serves as a coordination point for NADPH. NADPH is bound by residues L275 and E277.

This sequence belongs to the NAD-dependent glycerol-3-phosphate dehydrogenase family.

The protein resides in the cytoplasm. The catalysed reaction is sn-glycerol 3-phosphate + NAD(+) = dihydroxyacetone phosphate + NADH + H(+). The enzyme catalyses sn-glycerol 3-phosphate + NADP(+) = dihydroxyacetone phosphate + NADPH + H(+). It functions in the pathway membrane lipid metabolism; glycerophospholipid metabolism. Catalyzes the reduction of the glycolytic intermediate dihydroxyacetone phosphate (DHAP) to sn-glycerol 3-phosphate (G3P), the key precursor for phospholipid synthesis. This Agrobacterium fabrum (strain C58 / ATCC 33970) (Agrobacterium tumefaciens (strain C58)) protein is Glycerol-3-phosphate dehydrogenase [NAD(P)+].